The sequence spans 296 residues: tRNA uridine(34) hydroxylase (296 aa).

Positions 130–225 (RGEDVVFFDG…YGEAYGDRGL (96 aa)) constitute a Rhodanese domain. Catalysis depends on Cys185, which acts as the Cysteine persulfide intermediate.

This sequence belongs to the TrhO family.

The enzyme catalyses uridine(34) in tRNA + AH2 + O2 = 5-hydroxyuridine(34) in tRNA + A + H2O. In terms of biological role, catalyzes oxygen-dependent 5-hydroxyuridine (ho5U) modification at position 34 in tRNAs. In Kocuria rhizophila (strain ATCC 9341 / DSM 348 / NBRC 103217 / DC2201), this protein is tRNA uridine(34) hydroxylase.